Here is a 664-residue protein sequence, read N- to C-terminus: UvrABC system protein C (664 aa).

The 79-residue stretch at 63–141 (LRPGVYRMYD…IKRYRPPYNI (79 aa)) folds into the GIY-YIG domain. The region spanning 254–289 (THVQKKLVTAMEQASNDLNYELAAVYRDRLKALAFI) is the UVR domain.

Belongs to the UvrC family. As to quaternary structure, interacts with UvrB in an incision complex.

It localises to the cytoplasm. In terms of biological role, the UvrABC repair system catalyzes the recognition and processing of DNA lesions. UvrC both incises the 5' and 3' sides of the lesion. The N-terminal half is responsible for the 3' incision and the C-terminal half is responsible for the 5' incision. The chain is UvrABC system protein C from Zymomonas mobilis subsp. mobilis (strain ATCC 31821 / ZM4 / CP4).